The following is a 469-amino-acid chain: Endoplasmic reticulum oxidoreductin-1 (469 aa).

An N-terminal signal peptide occupies residues 1–36 (MGKGAIKEEESEKKRKTWRWPLATLVVVFLAVAVSS). 6 disulfide bridges follow: cysteine 52-cysteine 71, cysteine 54-cysteine 69, cysteine 108-cysteine 372, cysteine 117-cysteine 122, cysteine 222-cysteine 231, and cysteine 375-cysteine 378. Arginine 201, threonine 203, and tryptophan 214 together coordinate FAD. Serine 242, histidine 245, arginine 275, and arginine 282 together coordinate FAD. N-linked (GlcNAc...) asparagine glycosylation is present at asparagine 365.

Belongs to the EROs family. May function both as a monomer and a homodimer. Requires FAD as cofactor. Post-translationally, N-glycosylated.

It localises to the endoplasmic reticulum membrane. Functionally, essential oxidoreductase that oxidizes proteins in the endoplasmic reticulum to produce disulfide bonds. Acts by oxidizing directly PDI isomerase through a direct disulfide exchange. Does not act as a direct oxidant of folding substrate, but relies on PDI to transfer oxidizing equivalent. Does not oxidize all PDI related proteins, suggesting that it can discriminate between PDI and related proteins. Its reoxidation probably involves electron transfer to molecular oxygen via FAD. Acts independently of glutathione. May be responsible for a significant proportion of reactive oxygen species (ROS) in the cell, thereby being a source of oxidative stress. This Arabidopsis thaliana (Mouse-ear cress) protein is Endoplasmic reticulum oxidoreductin-1 (AERO1).